A 366-amino-acid chain; its full sequence is 3-dehydroquinate synthase (366 aa).

NAD(+) is bound by residues 71–76, 105–109, 129–130, lysine 142, lysine 151, and 169–172; these read DGEQYK, GVIGD, TT, and CLQT. Zn(2+) contacts are provided by glutamate 184, histidine 248, and histidine 265.

The protein belongs to the sugar phosphate cyclases superfamily. Dehydroquinate synthase family. Requires NAD(+) as cofactor. The cofactor is Co(2+). Zn(2+) serves as cofactor.

The protein localises to the cytoplasm. It catalyses the reaction 7-phospho-2-dehydro-3-deoxy-D-arabino-heptonate = 3-dehydroquinate + phosphate. The protein operates within metabolic intermediate biosynthesis; chorismate biosynthesis; chorismate from D-erythrose 4-phosphate and phosphoenolpyruvate: step 2/7. In terms of biological role, catalyzes the conversion of 3-deoxy-D-arabino-heptulosonate 7-phosphate (DAHP) to dehydroquinate (DHQ). This Photorhabdus laumondii subsp. laumondii (strain DSM 15139 / CIP 105565 / TT01) (Photorhabdus luminescens subsp. laumondii) protein is 3-dehydroquinate synthase.